The following is an 87-amino-acid chain: Small ribosomal subunit protein uS17 (87 aa).

The protein belongs to the universal ribosomal protein uS17 family. Part of the 30S ribosomal subunit.

Functionally, one of the primary rRNA binding proteins, it binds specifically to the 5'-end of 16S ribosomal RNA. The chain is Small ribosomal subunit protein uS17 from Endomicrobium trichonymphae.